The sequence spans 315 residues: Lipoyl synthase (315 aa).

The [4Fe-4S] cluster site is built by C63, C68, C74, C89, C93, C96, and S303. In terms of domain architecture, Radical SAM core spans 75-292 (FSHGTATFMI…EKKAYDMGFR (218 aa)).

It belongs to the radical SAM superfamily. Lipoyl synthase family. The cofactor is [4Fe-4S] cluster.

It localises to the cytoplasm. The catalysed reaction is [[Fe-S] cluster scaffold protein carrying a second [4Fe-4S](2+) cluster] + N(6)-octanoyl-L-lysyl-[protein] + 2 oxidized [2Fe-2S]-[ferredoxin] + 2 S-adenosyl-L-methionine + 4 H(+) = [[Fe-S] cluster scaffold protein] + N(6)-[(R)-dihydrolipoyl]-L-lysyl-[protein] + 4 Fe(3+) + 2 hydrogen sulfide + 2 5'-deoxyadenosine + 2 L-methionine + 2 reduced [2Fe-2S]-[ferredoxin]. The protein operates within protein modification; protein lipoylation via endogenous pathway; protein N(6)-(lipoyl)lysine from octanoyl-[acyl-carrier-protein]: step 2/2. Its function is as follows. Catalyzes the radical-mediated insertion of two sulfur atoms into the C-6 and C-8 positions of the octanoyl moiety bound to the lipoyl domains of lipoate-dependent enzymes, thereby converting the octanoylated domains into lipoylated derivatives. The protein is Lipoyl synthase of Laribacter hongkongensis (strain HLHK9).